Consider the following 442-residue polypeptide: uncharacterized protein (442 aa).

Positions 1–238 (MKAEGLSGGY…QSIKAVYDTD (238 aa)) constitute an ABC transporter domain. An ATP-binding site is contributed by 33–40 (GPNGSGKT).

It belongs to the ABC transporter superfamily. In terms of assembly, the complex is composed of two ATP-binding proteins (YvrA), two transmembrane proteins (YvrB) and a solute-binding protein (YvrC).

Probably part of an ABC transporter complex. Probably responsible for energy coupling to the transport system. This is an uncharacterized protein from Bacillus subtilis (strain 168).